The following is a 105-amino-acid chain: ATP-dependent Clp protease adapter protein ClpS (105 aa).

Belongs to the ClpS family. In terms of assembly, binds to the N-terminal domain of the chaperone ClpA.

Its function is as follows. Involved in the modulation of the specificity of the ClpAP-mediated ATP-dependent protein degradation. The chain is ATP-dependent Clp protease adapter protein ClpS from Aeromonas salmonicida (strain A449).